Here is a 113-residue protein sequence, read N- to C-terminus: Large ribosomal subunit protein bL17 (113 aa).

Belongs to the bacterial ribosomal protein bL17 family. In terms of assembly, part of the 50S ribosomal subunit. Contacts protein L32.

The chain is Large ribosomal subunit protein bL17 from Caldicellulosiruptor saccharolyticus (strain ATCC 43494 / DSM 8903 / Tp8T 6331).